We begin with the raw amino-acid sequence, 554 residues long: Glucose-6-phosphate isomerase (554 aa).

Glutamate 358 (proton donor) is an active-site residue. Catalysis depends on residues histidine 389 and lysine 515.

The protein belongs to the GPI family.

Its subcellular location is the cytoplasm. The catalysed reaction is alpha-D-glucose 6-phosphate = beta-D-fructose 6-phosphate. It functions in the pathway carbohydrate biosynthesis; gluconeogenesis. Its pathway is carbohydrate degradation; glycolysis; D-glyceraldehyde 3-phosphate and glycerone phosphate from D-glucose: step 2/4. Its function is as follows. Catalyzes the reversible isomerization of glucose-6-phosphate to fructose-6-phosphate. This Mycobacterium leprae (strain Br4923) protein is Glucose-6-phosphate isomerase.